The sequence spans 386 residues: WD repeat-containing protein 89 (386 aa).

WD repeat units lie at residues 21–65, 68–107, 112–156, 167–207, 213–253, and 318–357; these read KEPT…LLRE, GSPGLLNGVRFANSCDNVYSASTDGTVKCWDARLASEKPA, GYPS…QDLS, THSD…EEDA, NSVS…TDEP, and GHAATVRSFCWTVSEDSLLTGGEDAQLLLWKPGAVEKTFT.

This Rattus norvegicus (Rat) protein is WD repeat-containing protein 89 (Wdr89).